Consider the following 428-residue polypeptide: Adenylosuccinate synthetase (428 aa).

GTP contacts are provided by residues Gly12–Lys18 and Gly40–Thr42. Catalysis depends on Asp13, which acts as the Proton acceptor. 2 residues coordinate Mg(2+): Asp13 and Gly40. Residues Asp13–Lys16, Asn38–His41, Thr128, Arg142, Gln223, Thr238, and Arg302 contribute to the IMP site. His41 (proton donor) is an active-site residue. Thr298–Arg304 lines the substrate pocket. Residues Arg304, Lys330–Asp332, and Ser412–Gly414 contribute to the GTP site.

It belongs to the adenylosuccinate synthetase family. In terms of assembly, homodimer. It depends on Mg(2+) as a cofactor.

The protein localises to the cytoplasm. It carries out the reaction IMP + L-aspartate + GTP = N(6)-(1,2-dicarboxyethyl)-AMP + GDP + phosphate + 2 H(+). It functions in the pathway purine metabolism; AMP biosynthesis via de novo pathway; AMP from IMP: step 1/2. Its function is as follows. Plays an important role in the de novo pathway of purine nucleotide biosynthesis. Catalyzes the first committed step in the biosynthesis of AMP from IMP. The chain is Adenylosuccinate synthetase from Desulforamulus reducens (strain ATCC BAA-1160 / DSM 100696 / MI-1) (Desulfotomaculum reducens).